Here is a 675-residue protein sequence, read N- to C-terminus: Protein kintoun (675 aa).

4 disordered regions span residues 98-131, 265-293, 310-340, and 509-659; these read ASKK…KQGA, AGEG…TAPP, EGGA…AVAK, and EAAH…AAPT. Residues 102-113 show a composition bias toward basic and acidic residues; that stretch reads QQQEQEKQEKEQ. A compositionally biased stretch (low complexity) spans 279–293; sequence VPGVPDLPGAKTAPP. Positions 529–543 are enriched in low complexity; that stretch reads AAAASSGAAPAPAAA. Residues 544 to 553 are compositionally biased toward acidic residues; sequence SEEEEEEDKE. Residues 564–577 are compositionally biased toward low complexity; that stretch reads DPAAAAAAAGASSG. A compositionally biased stretch (basic and acidic residues) spans 579-596; that stretch reads ELTENERKWRELHARQQQ. 2 stretches are compositionally biased toward low complexity: residues 604 to 617 and 628 to 659; these read AAEA…AAAE and VAQG…AAPT.

The protein belongs to the PIH1 family. Kintoun subfamily.

Its subcellular location is the cytoplasm. Its function is as follows. Required for cytoplasmic pre-assembly of axonemal dyneins, thereby playing a central role in motility in cilia and flagella. Involved in pre-assembly of dynein arm complexes in the cytoplasm before intraflagellar transport loads them for the ciliary compartment. This is Protein kintoun (pf13) from Chlamydomonas reinhardtii (Chlamydomonas smithii).